Consider the following 591-residue polypeptide: Aspartate--tRNA(Asp/Asn) ligase (591 aa).

Glu170 serves as a coordination point for L-aspartate. The aspartate stretch occupies residues 194–197 (QLFK). Arg216 contributes to the L-aspartate binding site. Residues 216–218 (RDE) and Gln225 each bind ATP. His448 contributes to the L-aspartate binding site. Position 482 (Glu482) interacts with ATP. Arg489 provides a ligand contact to L-aspartate. 534 to 537 (GWDR) is an ATP binding site. Residues 559 to 591 (GGVDPLTDAPAPITEQQRKESGIDVKPEPSKPH) form a disordered region. The segment covering 574-591 (QQRKESGIDVKPEPSKPH) has biased composition (basic and acidic residues).

This sequence belongs to the class-II aminoacyl-tRNA synthetase family. Type 1 subfamily. In terms of assembly, homodimer.

Its subcellular location is the cytoplasm. The enzyme catalyses tRNA(Asx) + L-aspartate + ATP = L-aspartyl-tRNA(Asx) + AMP + diphosphate. Its function is as follows. Aspartyl-tRNA synthetase with relaxed tRNA specificity since it is able to aspartylate not only its cognate tRNA(Asp) but also tRNA(Asn). Reaction proceeds in two steps: L-aspartate is first activated by ATP to form Asp-AMP and then transferred to the acceptor end of tRNA(Asp/Asn). The chain is Aspartate--tRNA(Asp/Asn) ligase from Mycobacterium avium (strain 104).